A 113-amino-acid polypeptide reads, in one-letter code: Large ribosomal subunit protein uL24 (113 aa).

This sequence belongs to the universal ribosomal protein uL24 family. Part of the 50S ribosomal subunit.

Functionally, one of two assembly initiator proteins, it binds directly to the 5'-end of the 23S rRNA, where it nucleates assembly of the 50S subunit. One of the proteins that surrounds the polypeptide exit tunnel on the outside of the subunit. In Synechococcus elongatus (strain ATCC 33912 / PCC 7942 / FACHB-805) (Anacystis nidulans R2), this protein is Large ribosomal subunit protein uL24.